The sequence spans 128 residues: Large ribosomal subunit protein bL17 (128 aa).

The protein belongs to the bacterial ribosomal protein bL17 family. As to quaternary structure, part of the 50S ribosomal subunit. Contacts protein L32.

The polypeptide is Large ribosomal subunit protein bL17 (Pseudomonas syringae pv. syringae (strain B728a)).